Consider the following 485-residue polypeptide: Glutamyl-tRNA(Gln) amidotransferase subunit A (485 aa).

Active-site charge relay system residues include K78 and S153. The Acyl-ester intermediate role is filled by S177.

Belongs to the amidase family. GatA subfamily. In terms of assembly, heterotrimer of A, B and C subunits.

It catalyses the reaction L-glutamyl-tRNA(Gln) + L-glutamine + ATP + H2O = L-glutaminyl-tRNA(Gln) + L-glutamate + ADP + phosphate + H(+). In terms of biological role, allows the formation of correctly charged Gln-tRNA(Gln) through the transamidation of misacylated Glu-tRNA(Gln) in organisms which lack glutaminyl-tRNA synthetase. The reaction takes place in the presence of glutamine and ATP through an activated gamma-phospho-Glu-tRNA(Gln). This chain is Glutamyl-tRNA(Gln) amidotransferase subunit A, found in Geobacter metallireducens (strain ATCC 53774 / DSM 7210 / GS-15).